Reading from the N-terminus, the 193-residue chain is dCTP deaminase (193 aa).

Residues 110-115, Asp-128, 136-138, Tyr-171, Lys-178, and Gln-182 each bind dCTP; these read RSSLAR and VLE. Glu-138 (proton donor/acceptor) is an active-site residue. The disordered stretch occupies residues 174 to 193; sequence RKNAKYKDQQEAVASRISQD.

This sequence belongs to the dCTP deaminase family. Homotrimer.

The catalysed reaction is dCTP + H2O + H(+) = dUTP + NH4(+). It functions in the pathway pyrimidine metabolism; dUMP biosynthesis; dUMP from dCTP (dUTP route): step 1/2. Functionally, catalyzes the deamination of dCTP to dUTP. This chain is dCTP deaminase, found in Shewanella sp. (strain W3-18-1).